A 439-amino-acid polypeptide reads, in one-letter code: Ribosomal protein uS12 methylthiotransferase RimO (439 aa).

The MTTase N-terminal domain maps to K7–N119. Residues C16, C50, C82, C151, C155, and C158 each coordinate [4Fe-4S] cluster. The Radical SAM core domain occupies T137–K368.

It belongs to the methylthiotransferase family. RimO subfamily. The cofactor is [4Fe-4S] cluster.

The protein localises to the cytoplasm. It catalyses the reaction L-aspartate(89)-[ribosomal protein uS12]-hydrogen + (sulfur carrier)-SH + AH2 + 2 S-adenosyl-L-methionine = 3-methylsulfanyl-L-aspartate(89)-[ribosomal protein uS12]-hydrogen + (sulfur carrier)-H + 5'-deoxyadenosine + L-methionine + A + S-adenosyl-L-homocysteine + 2 H(+). In terms of biological role, catalyzes the methylthiolation of an aspartic acid residue of ribosomal protein uS12. The sequence is that of Ribosomal protein uS12 methylthiotransferase RimO from Helicobacter pylori (strain ATCC 700392 / 26695) (Campylobacter pylori).